We begin with the raw amino-acid sequence, 107 residues long: High mobility group protein HMG-I/HMG-Y (107 aa).

Residues 1–107 form a disordered region; the sequence is MSESSSKSSQ…ISQESSEEEQ (107 aa). An N-acetylserine modification is found at S2. K7 is subject to N6-acetyllysine. S8 is modified (ADP-ribosylserine). An ADP-ribosylserine; alternate modification is found at S9. S9 carries the phosphoserine; alternate modification. K15 carries the N6-acetyllysine; alternate modification. K15 participates in a covalent cross-link: Glycyl lysine isopeptide (Lys-Gly) (interchain with G-Cter in SUMO2); alternate. The span at 15–24 shows a compositional bias: basic and acidic residues; it reads KQEKDGTEKR. Residues 21 to 31 constitute a DNA-binding region (a.T hook 1); that stretch reads TEKRGRGRPRK. The residue at position 26 (R26) is an Asymmetric dimethylarginine; alternate. Omega-N-methylarginine; alternate is present on R26. Residue R26 is modified to Symmetric dimethylarginine; alternate. Position 36 is a phosphoserine; by HIPK2 and CDC2 (S36). Phosphothreonine occurs at positions 39 and 42. Residues S44 and S49 each carry the phosphoserine modification. At T53 the chain carries Phosphothreonine; by HIPK2 and CDC2. Residues 53-63 constitute a DNA-binding region (a.T hook 2); the sequence is TPKRPRGRPKG. The interaction with HIPK2 stretch occupies residues 53 to 77; the sequence is TPKRPRGRPKGSKNKGAAKTRKTTT. Residues 55-74 show a composition bias toward basic residues; sequence KRPRGRPKGSKNKGAAKTRK. An asymmetric dimethylarginine; by PRMT6; alternate mark is found at R58 and R60. Omega-N-methylarginine; by PRMT6; alternate occurs at positions 58 and 60. A Phosphothreonine modification is found at K67. A Phosphothreonine; by HIPK2 and CDC2 modification is found at T78. The segment at residues 78-89 is a DNA-binding region (a.T hook 3); the sequence is TPGRKPRGRPKK. Positions 93-107 are enriched in acidic residues; that stretch reads EEEEGISQESSEEEQ. At S99 the chain carries Phosphoserine. S102 and S103 each carry phosphoserine; by CK.

This sequence belongs to the HMGA family. Interacts with HIPK2. In terms of processing, constitutively phosphorylated on two or three sites. Hyperphosphorylated at early stages of apoptosis, followed by dephosphorylation and methylation, which coincides with chromatin condensation. Isoforms HMG-I and HMG-Y can be phosphorylated by HIPK2. Phosphorylation of HMG-I at Ser-36, Thr-53 and Thr-78 and of HMG-Y at Thr-42 and Thr-67 by HIPK2 modulates DNA-binding affinity. HMG-Y is not methylated. Post-translationally, methylation at Arg-58 is mutually exclusive with methylation at Arg-60.

The protein resides in the nucleus. The protein localises to the chromosome. HMG-I/Y bind preferentially to the minor groove of A+T rich regions in double-stranded DNA. It is suggested that these proteins could function in nucleosome phasing and in the 3'-end processing of mRNA transcripts. They are also involved in the transcription regulation of genes containing, or in close proximity to A+T-rich regions. The chain is High mobility group protein HMG-I/HMG-Y (HMGA1) from Homo sapiens (Human).